The primary structure comprises 188 residues: ADP-ribosylation factor K (188 aa).

Residues 34–40 (DGAGKST), 75–79 (DVGGQ), and 134–137 (NKQD) contribute to the GTP site.

This sequence belongs to the small GTPase superfamily. Arf family.

The protein localises to the golgi apparatus. GTP-binding protein that may be involved in protein trafficking. May modulate vesicle budding and uncoating within the Golgi apparatus. The polypeptide is ADP-ribosylation factor K (arrK) (Dictyostelium discoideum (Social amoeba)).